The following is a 276-amino-acid chain: NH(3)-dependent NAD(+) synthetase (276 aa).

Residue 43–50 (GISGGVDS) coordinates ATP. Asp49 provides a ligand contact to Mg(2+). A deamido-NAD(+)-binding site is contributed by Arg146. Thr166 is a binding site for ATP. Mg(2+) is bound at residue Glu171. Lys179 and Asp186 together coordinate deamido-NAD(+). ATP is bound by residues Lys195 and Thr217. Deamido-NAD(+) is bound at residue 266–267 (HK).

This sequence belongs to the NAD synthetase family. In terms of assembly, homodimer.

It carries out the reaction deamido-NAD(+) + NH4(+) + ATP = AMP + diphosphate + NAD(+) + H(+). It participates in cofactor biosynthesis; NAD(+) biosynthesis; NAD(+) from deamido-NAD(+) (ammonia route): step 1/1. Catalyzes the ATP-dependent amidation of deamido-NAD to form NAD. Uses ammonia as a nitrogen source. The sequence is that of NH(3)-dependent NAD(+) synthetase from Shewanella woodyi (strain ATCC 51908 / MS32).